A 468-amino-acid chain; its full sequence is MESSFSFGVILAVLTILIIAVNALVVVAMLLSIYKNDGVGLCFTLNLAVADTLIGVAISGLVTDQLSSSAQHTQKTLCSLRMAFVTSSAAASVLTVMLIAFDRYLAIKQPLRYFQIMNGLVAGGCIAGLWLISYLIGFLPLGVSIFQQTTYHGPCTFFAVFHPRFVLTLSCAGFFPAVLLFVFFYCDMLKIASVHSQHIRKMEHAGAMVGACRPPRPVNDFKAVRTVSVLIGSFTLSWSPFLITSIVQVACHKCCLYQVLEKYLWLLGVGNSLLNPLIYAYWQREVRQQLCHMALGLLADGSTQPQIETLKGKEERKKVGRKTLYTCDAQTLYTCDAQTLYTCDAQTLYTCDACDTQTLYTCDAQTLYTCDAQTLYTCDAQTLYTCDAQTLYTCDAQTLYTCDTQTLYTCDAQTLYTCDAQTLYTCDAQTLYTCDAQTLYTSSLVTGQTEQTPLKRANMSDPLRTCRG.

Residues 1 to 6 (MESSFS) lie on the Extracellular side of the membrane. A helical membrane pass occupies residues 7-27 (FGVILAVLTILIIAVNALVVV). Topologically, residues 28 to 37 (AMLLSIYKND) are cytoplasmic. Residues 38-58 (GVGLCFTLNLAVADTLIGVAI) traverse the membrane as a helical segment. At 59–81 (SGLVTDQLSSSAQHTQKTLCSLR) the chain is on the extracellular side. The helical transmembrane segment at 82 to 102 (MAFVTSSAAASVLTVMLIAFD) threads the bilayer. Residues 103–125 (RYLAIKQPLRYFQIMNGLVAGGC) are Cytoplasmic-facing. Residues 126 to 146 (IAGLWLISYLIGFLPLGVSIF) form a helical membrane-spanning segment. Over 147–164 (QQTTYHGPCTFFAVFHPR) the chain is Extracellular. The helical transmembrane segment at 165–185 (FVLTLSCAGFFPAVLLFVFFY) threads the bilayer. Residues 186 to 226 (CDMLKIASVHSQHIRKMEHAGAMVGACRPPRPVNDFKAVRT) are Cytoplasmic-facing. A helical transmembrane segment spans residues 227-247 (VSVLIGSFTLSWSPFLITSIV). Over 248–262 (QVACHKCCLYQVLEK) the chain is Extracellular. Residues 263–283 (YLWLLGVGNSLLNPLIYAYWQ) traverse the membrane as a helical segment. The Cytoplasmic segment spans residues 284–468 (REVRQQLCHM…MSDPLRTCRG (185 aa)).

The protein belongs to the G-protein coupled receptor 1 family. Expression restricted to the beta-cells of pancreatic islets.

Its subcellular location is the cell membrane. Functionally, receptor for the endogenous fatty-acid ethanolamide oleoylethanolamide (OEA) and lysophosphatidylcholine (LPC). Functions as a glucose-dependent insulinotropic receptor. The activity of this receptor is mediated by G proteins which activate adenylate cyclase. Seems to act through a G(s) mediated pathway. This chain is Glucose-dependent insulinotropic receptor (Gpr119), found in Rattus norvegicus (Rat).